The chain runs to 250 residues: Probable transcriptional regulatory protein SYNAS_07390 (250 aa).

It belongs to the TACO1 family.

It localises to the cytoplasm. The chain is Probable transcriptional regulatory protein SYNAS_07390 from Syntrophus aciditrophicus (strain SB).